Here is a 512-residue protein sequence, read N- to C-terminus: Neuronal acetylcholine receptor subunit alpha-3 (512 aa).

The signal sequence occupies residues 1–23; sequence MNSASRITLFFLLTVLITQECLS. The Extracellular segment spans residues 24-242; that stretch reads SKGEDRLFRR…PLFYTINLII (219 aa). Residues Asn47 and Asn164 are each glycosylated (N-linked (GlcNAc...) asparagine). 2 disulfide bridges follow: Cys151–Cys165 and Cys215–Cys216. A helical membrane pass occupies residues 243–258; it reads PCLLISFLTILVFYLP. Residues 259-260 are Cytoplasmic-facing; that stretch reads SD. A helical membrane pass occupies residues 261–277; it reads CGEKVTLCISVLLSLTV. Glu263 lines the Na(+) pocket. At 278–299 the chain is on the extracellular side; that stretch reads FLLVITETIPSTSLVIPLIGEY. The helical transmembrane segment at 300 to 318 threads the bilayer; it reads LLFTMIFVTLSIVITVFVL. The Cytoplasmic segment spans residues 319 to 482; it reads NVHYRTPMTH…EDDWKYVAMV (164 aa). The interval 356-389 is disordered; that stretch reads ESSGKGGGEIAGSSGTGGGRGAEGKKMKSSASQQ. Gly residues predominate over residues 359–376; sequence GKGGGEIAGSSGTGGGRG. The helical transmembrane segment at 483–501 threads the bilayer; sequence IDRIFLWVFVLVCVLGTLG. Residues 502–512 are Extracellular-facing; it reads LFLQPLIGFFS.

It belongs to the ligand-gated ion channel (TC 1.A.9) family. Acetylcholine receptor (TC 1.A.9.1) subfamily. Alpha-3/CHRNA3 sub-subfamily. In terms of assembly, neuronal AChR is composed of two different types of subunits: alpha and beta. CHRNA3/Alpha-3 subunit can be combined to CHRNB2/beta-2 or CHRNB4/beta-4 to give rise to functional receptors. Expressed in retina and brain.

It localises to the synaptic cell membrane. Its subcellular location is the cell membrane. The protein resides in the endoplasmic reticulum. It is found in the golgi apparatus. The catalysed reaction is K(+)(in) = K(+)(out). The enzyme catalyses Na(+)(in) = Na(+)(out). It catalyses the reaction Ca(2+)(in) = Ca(2+)(out). With respect to regulation, activated by a myriad of ligands such as acetylcholine, cytisine, nicotine, choline and epibatidine. The heteropentamer CHRNA3:CHRNB2 activity is blocked by alpha-conotoxins ImI, ImII, PnIA, GID and MII. The heteropentamer CHRNA3:CHRNB4 activity is blocked by the alpha-conotoxin ImI and AuIB. In terms of biological role, component of neuronal acetylcholine receptors (nAChRs) that function as pentameric, ligand-gated cation channels with high calcium permeability among other activities. nAChRs are excitatory neurotrasnmitter receptors formed by a collection of nAChR subunits known to mediate synaptic transmission in the nervous system and the neuromuscular junction. Each nAchR subunit confers differential attributes to channel properties, including activation, deactivation and desensitization kinetics, pH sensitivity, cation permeability, and binding to allosteric modulators. CHRNA3 forms heteropentameric neuronal acetylcholine receptors with CHRNB2 and CHRNB4. CHRNA3:CHRNB4 being predominant in neurons of the autonomic ganglia, it is known as ganglionic nicotinic receptor. CHRNA3:CHRNB4 also plays an important role in the habenulo-interpeduncular tract, modulating the mesolimbic dopamine system and affecting reward circuits and addiction. Hypothalamic CHRNA3:CHRNB4 nAChR activation by nicotine leads to activation of POMC neurons and a decrease in food intake. Also expressed in the urothelium where it modulates reflex bladder activity by increasing intracellular calcium through extracellular influx and basal ATP release. This is Neuronal acetylcholine receptor subunit alpha-3 (chrna3) from Carassius auratus (Goldfish).